The chain runs to 308 residues: Ribonuclease HIII (308 aa).

Residues 91–308 (KNVIGSDEVG…TEKALKMVKK (218 aa)) enclose the RNase H type-2 domain. The a divalent metal cation site is built by Asp-97, Glu-98, and Asp-202.

Belongs to the RNase HII family. RnhC subfamily. Mn(2+) serves as cofactor. Requires Mg(2+) as cofactor.

It is found in the cytoplasm. It catalyses the reaction Endonucleolytic cleavage to 5'-phosphomonoester.. Functionally, endonuclease that specifically degrades the RNA of RNA-DNA hybrids. This chain is Ribonuclease HIII, found in Listeria monocytogenes serovar 1/2a (strain ATCC BAA-679 / EGD-e).